The following is a 199-amino-acid chain: Holliday junction branch migration complex subunit RuvA (199 aa).

The domain I stretch occupies residues 1–65 (MIGWLHGQII…EDALLLYGFL (65 aa)). The interval 66–144 (DKEERSLFRS…QFDGSVSDTF (79 aa)) is domain II. A flexible linker region spans residues 144-148 (FQKQA). The segment at 149-199 (GSTHSQQEAISALEALGYKPQEAWKVMNKIDNGNKSCEQLIREALQILSSR) is domain III.

This sequence belongs to the RuvA family. Homotetramer. Forms an RuvA(8)-RuvB(12)-Holliday junction (HJ) complex. HJ DNA is sandwiched between 2 RuvA tetramers; dsDNA enters through RuvA and exits via RuvB. An RuvB hexamer assembles on each DNA strand where it exits the tetramer. Each RuvB hexamer is contacted by two RuvA subunits (via domain III) on 2 adjacent RuvB subunits; this complex drives branch migration. In the full resolvosome a probable DNA-RuvA(4)-RuvB(12)-RuvC(2) complex forms which resolves the HJ.

The protein localises to the cytoplasm. In terms of biological role, the RuvA-RuvB-RuvC complex processes Holliday junction (HJ) DNA during genetic recombination and DNA repair, while the RuvA-RuvB complex plays an important role in the rescue of blocked DNA replication forks via replication fork reversal (RFR). RuvA specifically binds to HJ cruciform DNA, conferring on it an open structure. The RuvB hexamer acts as an ATP-dependent pump, pulling dsDNA into and through the RuvAB complex. HJ branch migration allows RuvC to scan DNA until it finds its consensus sequence, where it cleaves and resolves the cruciform DNA. This Legionella pneumophila subsp. pneumophila (strain Philadelphia 1 / ATCC 33152 / DSM 7513) protein is Holliday junction branch migration complex subunit RuvA.